Reading from the N-terminus, the 192-residue chain is Imidazoleglycerol-phosphate dehydratase (192 aa).

It belongs to the imidazoleglycerol-phosphate dehydratase family.

The protein localises to the cytoplasm. The catalysed reaction is D-erythro-1-(imidazol-4-yl)glycerol 3-phosphate = 3-(imidazol-4-yl)-2-oxopropyl phosphate + H2O. Its pathway is amino-acid biosynthesis; L-histidine biosynthesis; L-histidine from 5-phospho-alpha-D-ribose 1-diphosphate: step 6/9. This chain is Imidazoleglycerol-phosphate dehydratase, found in Methanocella arvoryzae (strain DSM 22066 / NBRC 105507 / MRE50).